The chain runs to 400 residues: 1-deoxy-D-xylulose 5-phosphate reductoisomerase (400 aa).

The NADPH site is built by T17, G18, S19, I20, and N131. 1-deoxy-D-xylulose 5-phosphate is bound at residue K132. E133 contacts NADPH. D157 contacts Mn(2+). 1-deoxy-D-xylulose 5-phosphate-binding residues include S158, E159, S188, and H211. Position 159 (E159) interacts with Mn(2+). G217 lines the NADPH pocket. 4 residues coordinate 1-deoxy-D-xylulose 5-phosphate: S224, N229, K230, and E233. E233 is a Mn(2+) binding site.

This sequence belongs to the DXR family. The cofactor is Mg(2+). Mn(2+) serves as cofactor.

It carries out the reaction 2-C-methyl-D-erythritol 4-phosphate + NADP(+) = 1-deoxy-D-xylulose 5-phosphate + NADPH + H(+). It functions in the pathway isoprenoid biosynthesis; isopentenyl diphosphate biosynthesis via DXP pathway; isopentenyl diphosphate from 1-deoxy-D-xylulose 5-phosphate: step 1/6. Functionally, catalyzes the NADPH-dependent rearrangement and reduction of 1-deoxy-D-xylulose-5-phosphate (DXP) to 2-C-methyl-D-erythritol 4-phosphate (MEP). In Pseudomonas putida (strain ATCC 47054 / DSM 6125 / CFBP 8728 / NCIMB 11950 / KT2440), this protein is 1-deoxy-D-xylulose 5-phosphate reductoisomerase.